The sequence spans 557 residues: Protein NRT1/ PTR FAMILY 5.14 (557 aa).

2 consecutive transmembrane segments (helical) span residues 35 to 55 (AALF…GIGS) and 78 to 98 (AWSG…DAFL). Threonine 103 carries the phosphothreonine modification. 10 consecutive transmembrane segments (helical) span residues 104-124 (IIIS…SAFL), 133-153 (SSTS…VAIG), 183-203 (FFNW…LVVV), 209-229 (FSWA…LVLF), 320-340 (IPVW…MTFF), 357-377 (IPPA…VPIY), 401-421 (IGTG…VEFK), 443-463 (IWWL…TLVG), 479-499 (IGLA…SLLI), and 526-546 (YFYW…LFIS).

The protein belongs to the major facilitator superfamily. Proton-dependent oligopeptide transporter (POT/PTR) (TC 2.A.17) family. As to expression, expressed in roots.

Its subcellular location is the membrane. This chain is Protein NRT1/ PTR FAMILY 5.14 (NPF5.14), found in Arabidopsis thaliana (Mouse-ear cress).